The chain runs to 295 residues: Ubiquitin-conjugating enzyme E2-34 kDa (295 aa).

The region spanning 7 to 169 is the UBC core domain; sequence TASSLLLRQY…VKMEVERSKQ (163 aa). Catalysis depends on Cys-95, which acts as the Glycyl thioester intermediate. The disordered stretch occupies residues 185 to 295; sequence ISQSKLDEPE…EDVERVSKKI (111 aa). Ser-186 is subject to Phosphoserine. Residues 189–200 show a composition bias toward basic and acidic residues; it reads KLDEPESNKDMA. 2 stretches are compositionally biased toward acidic residues: residues 207–226 and 234–265; these read SDLD…DYDD and EDDD…DSID. The segment covering 269–279 has biased composition (basic and acidic residues); it reads VMDRKQPHKAE. Residues Ser-282 and Ser-292 each carry the phosphoserine modification.

The protein belongs to the ubiquitin-conjugating enzyme family. As to quaternary structure, interacts with CDC53. Component of the E3 ubiquitin ligase complexes SCF with CDC53, SKP1/CBF3D, HRT1 and some F-box proteins like MET30 and CDC4.

The protein resides in the cytoplasm. It is found in the nucleus. It carries out the reaction S-ubiquitinyl-[E1 ubiquitin-activating enzyme]-L-cysteine + [E2 ubiquitin-conjugating enzyme]-L-cysteine = [E1 ubiquitin-activating enzyme]-L-cysteine + S-ubiquitinyl-[E2 ubiquitin-conjugating enzyme]-L-cysteine.. It functions in the pathway protein modification; protein ubiquitination. Its function is as follows. Catalyzes the covalent attachment of ubiquitin to other proteins. Capable, in vitro, to ubiquitinate histone H2A. Mediates the initiation of DNA replication (transition of G1 to S phase in cell cycle). Essential component of the E3 ubiquitin ligase complex SCF (SKP1-CUL1-F-box protein), which mediates the ubiquitination and subsequent proteasomal degradation of target proteins. Involved in the regulation of methionine biosynthesis genes and in the degradation of CDC6 together with CDC4 and CDC53. This Saccharomyces cerevisiae (strain ATCC 204508 / S288c) (Baker's yeast) protein is Ubiquitin-conjugating enzyme E2-34 kDa (CDC34).